A 962-amino-acid chain; its full sequence is Glycine dehydrogenase (decarboxylating) (962 aa).

Lysine 709 carries the post-translational modification N6-(pyridoxal phosphate)lysine.

Belongs to the GcvP family. In terms of assembly, the glycine cleavage system is composed of four proteins: P, T, L and H. Pyridoxal 5'-phosphate serves as cofactor.

It carries out the reaction N(6)-[(R)-lipoyl]-L-lysyl-[glycine-cleavage complex H protein] + glycine + H(+) = N(6)-[(R)-S(8)-aminomethyldihydrolipoyl]-L-lysyl-[glycine-cleavage complex H protein] + CO2. The glycine cleavage system catalyzes the degradation of glycine. The P protein binds the alpha-amino group of glycine through its pyridoxal phosphate cofactor; CO(2) is released and the remaining methylamine moiety is then transferred to the lipoamide cofactor of the H protein. This Shewanella putrefaciens (strain CN-32 / ATCC BAA-453) protein is Glycine dehydrogenase (decarboxylating).